A 206-amino-acid chain; its full sequence is Dual specificity phosphatase 29 (206 aa).

Residues 47-194 (HVNQVWPSVY…LRALDITLQE (148 aa)) form the Tyrosine-protein phosphatase domain. 138–145 (HCVMGRSR) contacts substrate. Cys139 functions as the Phosphocysteine intermediate in the catalytic mechanism.

The protein belongs to the protein-tyrosine phosphatase family. Non-receptor class dual specificity subfamily.

It localises to the cytoplasm. It is found in the nucleus. The catalysed reaction is O-phospho-L-tyrosyl-[protein] + H2O = L-tyrosyl-[protein] + phosphate. The enzyme catalyses O-phospho-L-seryl-[protein] + H2O = L-seryl-[protein] + phosphate. It catalyses the reaction O-phospho-L-threonyl-[protein] + H2O = L-threonyl-[protein] + phosphate. In terms of biological role, dual specificity phosphatase able to dephosphorylate phosphotyrosine, phosphoserine and phosphothreonine residues within the same substrate, with a preference for phosphotyrosine as a substrate. Involved in the modulation of AMPK and MAPK1/2 signaling pathways. This Gasterosteus aculeatus (Three-spined stickleback) protein is Dual specificity phosphatase 29 (dusp29).